Here is a 560-residue protein sequence, read N- to C-terminus: Kinesin light chain 1 (560 aa).

Positions 31-99 form a coiled coil; sequence VIQGLEALKN…MALSNHLNAV (69 aa). Positions 155–176 are enriched in basic and acidic residues; the sequence is KKYDDDISPSEDKDTDSTKEPL. The segment at 155-203 is disordered; that stretch reads KKYDDDISPSEDKDTDSTKEPLDDLFPNDEDDPGQGIQQQHSSAAAAAQ. At S162 the chain carries Phosphoserine. A compositionally biased stretch (low complexity) spans 192 to 203; it reads QQQHSSAAAAAQ. TPR repeat units lie at residues 213–246, 255–288, 297–330, 339–372, and 381–414; these read LRTL…LEKT, ATML…REKT, AATL…REKV, AKQL…YQTK, and AKTK…AHER. A Phosphotyrosine modification is found at Y449. The residue at position 460 (S460) is a Phosphoserine. Residues 464 to 497 form a TPR 6 repeat; that stretch reads TTTLKNLGALYRRQGKFEAAETLEEAAMRSRKQG. S521 and S524 each carry phosphoserine; by AMPK.

It belongs to the kinesin light chain family. As to quaternary structure, oligomeric complex composed of two heavy chains and two light chains. Interacts with SPAG9. Interacts with ATCAY; may link mitochondria to KLC1 and regulate mitochondria localization into neuron projections. Interacts (via TPR repeats) with TOR1A; the interaction associates TOR1A with the kinesin oligomeric complex. Interacts with BORCS5. Interacts with MAPK8IP3/JIP3 and NTRK2/TRKB; interaction with NTRK2/TRKB is mediated by MAPK8IP3/JIP3. Interacts with CLSTN1; phosphorylation at Ser-460 inhibits interaction with CLSTN1. In terms of processing, phosphorylation at Ser-460 by ERK inhibits interaction with CLSTN1 and localization to cytoplasmic vesicles.

Its subcellular location is the cell projection. It is found in the growth cone. The protein localises to the cytoplasmic vesicle. The protein resides in the cytoplasm. It localises to the cytoskeleton. Functionally, kinesin is a microtubule-associated force-producing protein that may play a role in organelle transport. The light chain may function in coupling of cargo to the heavy chain or in the modulation of its ATPase activity. The protein is Kinesin light chain 1 (KLC1) of Pongo abelii (Sumatran orangutan).